The primary structure comprises 306 residues: Homoserine O-acetyltransferase (306 aa).

Residue Cys142 is the Acyl-thioester intermediate of the active site. Substrate contacts are provided by Lys163 and Ser192. Residue His235 is the Proton acceptor of the active site. Glu237 is an active-site residue. Position 249 (Arg249) interacts with substrate.

Belongs to the MetA family.

The protein localises to the cytoplasm. The enzyme catalyses L-homoserine + acetyl-CoA = O-acetyl-L-homoserine + CoA. It participates in amino-acid biosynthesis; L-methionine biosynthesis via de novo pathway; O-acetyl-L-homoserine from L-homoserine: step 1/1. Its function is as follows. Transfers an acetyl group from acetyl-CoA to L-homoserine, forming acetyl-L-homoserine. In Clostridium botulinum (strain Alaska E43 / Type E3), this protein is Homoserine O-acetyltransferase.